The following is a 303-amino-acid chain: Dipeptide transport system permease protein DppB (303 aa).

7 consecutive transmembrane segments (helical) span residues Leu9–Val29, Tyr62–Asn82, Leu93–Leu113, Ile129–Ile149, Gly166–Val186, Ile227–Ile247, and Phe269–Val289. The ABC transmembrane type-1 domain occupies Leu93–Thr290.

It belongs to the binding-protein-dependent transport system permease family. OppBC subfamily. In terms of assembly, the complex is composed of two ATP-binding proteins (DppD and DppF), two transmembrane proteins (DppB and DppC) and a solute-binding protein (DppA).

It localises to the cell membrane. Part of the ABC transporter DppABCDF involved in dipeptide transport. Responsible for the translocation of the substrate across the membrane. This chain is Dipeptide transport system permease protein DppB, found in Lactococcus lactis subsp. cremoris (strain MG1363).